The chain runs to 302 residues: Glycine--tRNA ligase alpha subunit (302 aa).

This sequence belongs to the class-II aminoacyl-tRNA synthetase family. Tetramer of two alpha and two beta subunits.

It localises to the cytoplasm. The enzyme catalyses tRNA(Gly) + glycine + ATP = glycyl-tRNA(Gly) + AMP + diphosphate. This Psychromonas ingrahamii (strain DSM 17664 / CCUG 51855 / 37) protein is Glycine--tRNA ligase alpha subunit.